Consider the following 366-residue polypeptide: 3-dehydroquinate synthase (366 aa).

NAD(+)-binding positions include 74 to 79 (SGEAAK), 108 to 112 (GVVGD), 132 to 133 (TT), Lys144, Lys153, and 171 to 174 (FLRT). Zn(2+)-binding residues include Glu186, His249, and His266.

The protein belongs to the sugar phosphate cyclases superfamily. Dehydroquinate synthase family. It depends on Co(2+) as a cofactor. Requires Zn(2+) as cofactor. The cofactor is NAD(+).

The protein localises to the cytoplasm. The catalysed reaction is 7-phospho-2-dehydro-3-deoxy-D-arabino-heptonate = 3-dehydroquinate + phosphate. It participates in metabolic intermediate biosynthesis; chorismate biosynthesis; chorismate from D-erythrose 4-phosphate and phosphoenolpyruvate: step 2/7. Its function is as follows. Catalyzes the conversion of 3-deoxy-D-arabino-heptulosonate 7-phosphate (DAHP) to dehydroquinate (DHQ). The sequence is that of 3-dehydroquinate synthase from Geobacillus kaustophilus (strain HTA426).